A 510-amino-acid polypeptide reads, in one-letter code: GMP synthase [glutamine-hydrolyzing] (510 aa).

The Glutamine amidotransferase type-1 domain maps to 5–195 (LVLVVDFGGQ…LFNVCNLKGD (191 aa)). Cysteine 82 serves as the catalytic Nucleophile. Residues histidine 169 and glutamate 171 contribute to the active site. Residues 196-385 (WSMSSFAEQQ…LGIPHKLVWR (190 aa)) form the GMPS ATP-PPase domain. 223–229 (SGGVDSS) lines the ATP pocket.

In terms of assembly, homodimer.

It carries out the reaction XMP + L-glutamine + ATP + H2O = GMP + L-glutamate + AMP + diphosphate + 2 H(+). The protein operates within purine metabolism; GMP biosynthesis; GMP from XMP (L-Gln route): step 1/1. In terms of biological role, catalyzes the synthesis of GMP from XMP. This chain is GMP synthase [glutamine-hydrolyzing], found in Clostridium botulinum (strain ATCC 19397 / Type A).